The chain runs to 180 residues: MSGVVALGHASSWGAALVRISPYTFSAIGIAISIGVSVLGAAWGIYITGSSLIGAAIEAPRITSKNLISVIFCEAVAIYGVIVAIILQTKLESVPSSKMYDAESLRAGYAIFASGIIVGFANLVCGLCVGIIGSSCALSDAQNSTLFVKILVIEIFGSALGLFGVIVGIIMSAQATWPTK.

The Lumenal segment spans residues 1-26 (MSGVVALGHASSWGAALVRISPYTFS). Residues 27 to 47 (AIGIAISIGVSVLGAAWGIYI) traverse the membrane as a helical segment. Residues 48-66 (TGSSLIGAAIEAPRITSKN) are Cytoplasmic-facing. The helical transmembrane segment at 67–87 (LISVIFCEAVAIYGVIVAIIL) threads the bilayer. Residues 88–110 (QTKLESVPSSKMYDAESLRAGYA) are Lumenal-facing. Residues 111–131 (IFASGIIVGFANLVCGLCVGI) traverse the membrane as a helical segment. Over 132–149 (IGSSCALSDAQNSTLFVK) the chain is Cytoplasmic. A helical transmembrane segment spans residues 150-170 (ILVIEIFGSALGLFGVIVGII). Residues 171–180 (MSAQATWPTK) are Lumenal-facing.

The protein belongs to the V-ATPase proteolipid subunit family. In terms of assembly, V-ATPase is a heteromultimeric enzyme composed of a peripheral catalytic V1 complex (components A to H) attached to an integral membrane V0 proton pore complex (components: a, c, c'', d and e). The proteolipid components c and c'' are present as a hexameric ring that forms the proton-conducting pore. As to expression, preferentially expressed in roots.

Its subcellular location is the endoplasmic reticulum membrane. The protein resides in the golgi apparatus membrane. In terms of biological role, proton-conducting pore forming subunit of the membrane integral V0 complex of vacuolar ATPase. V-ATPase is responsible for acidifying a variety of intracellular compartments in eukaryotic cells. This chain is V-type proton ATPase subunit c''1 (VHA-c''1), found in Arabidopsis thaliana (Mouse-ear cress).